The primary structure comprises 379 residues: Pathogen-associated molecular patterns-induced protein A70 (379 aa).

A helical membrane pass occupies residues 7 to 29 (VASFFTPTTLFLLLNLMIGTIVV). The N-linked (GlcNAc...) asparagine glycan is linked to N122. A disordered region spans residues 133-154 (TGSDPHSHSHSHLDLHPDPAPA). Residues 137–149 (PHSHSHSHLDLHP) are compositionally biased toward basic and acidic residues. N170 carries N-linked (GlcNAc...) asparagine glycosylation. 2 disordered regions span residues 216-238 (PEED…LTRA) and 256-347 (SDPD…DGVD). Over residues 221–231 (PTGTGVNSQIN) the composition is skewed to polar residues. 2 stretches are compositionally biased toward basic and acidic residues: residues 256–285 (SDPD…ESKK) and 322–335 (SLER…RVER).

The protein resides in the membrane. The chain is Pathogen-associated molecular patterns-induced protein A70 from Arabidopsis thaliana (Mouse-ear cress).